The sequence spans 474 residues: L-arabinose isomerase 2 (474 aa).

Residues E306, E331, H348, and H447 each coordinate Mn(2+).

Belongs to the arabinose isomerase family. Mn(2+) is required as a cofactor.

It catalyses the reaction beta-L-arabinopyranose = L-ribulose. It participates in carbohydrate degradation; L-arabinose degradation via L-ribulose; D-xylulose 5-phosphate from L-arabinose (bacterial route): step 1/3. In terms of biological role, catalyzes the conversion of L-arabinose to L-ribulose. The polypeptide is L-arabinose isomerase 2 (Bacillus licheniformis (strain ATCC 14580 / DSM 13 / JCM 2505 / CCUG 7422 / NBRC 12200 / NCIMB 9375 / NCTC 10341 / NRRL NRS-1264 / Gibson 46)).